Consider the following 109-residue polypeptide: Thiosulfate sulfurtransferase GlpE (109 aa).

A Rhodanese domain is found at 17 to 105 (HQQTAVLVDI…WHRHFPAEVA (89 aa)). Residue C65 is the Cysteine persulfide intermediate of the active site.

It belongs to the GlpE family.

Its subcellular location is the cytoplasm. It catalyses the reaction thiosulfate + hydrogen cyanide = thiocyanate + sulfite + 2 H(+). The catalysed reaction is thiosulfate + [thioredoxin]-dithiol = [thioredoxin]-disulfide + hydrogen sulfide + sulfite + 2 H(+). In terms of biological role, transferase that catalyzes the transfer of sulfur from thiosulfate to thiophilic acceptors such as cyanide or dithiols. May function in a CysM-independent thiosulfate assimilation pathway by catalyzing the conversion of thiosulfate to sulfite, which can then be used for L-cysteine biosynthesis. This is Thiosulfate sulfurtransferase GlpE from Klebsiella pneumoniae (strain 342).